A 652-amino-acid chain; its full sequence is Oligopeptide-binding protein AliB (652 aa).

The N-terminal stretch at 1-24 (MKKSKSKYLTLAGLVLGTGVLLSA) is a signal peptide. A lipid anchor (N-palmitoyl cysteine) is attached at cysteine 25. Cysteine 25 carries the S-diacylglycerol cysteine lipid modification.

Belongs to the bacterial solute-binding protein 5 family.

It is found in the cell membrane. Part of the binding-protein-dependent transport system for oligopeptides; probably an oligopeptide binding protein. In Streptococcus pneumoniae serotype 4 (strain ATCC BAA-334 / TIGR4), this protein is Oligopeptide-binding protein AliB (aliB).